The sequence spans 453 residues: MIILETRSLKYSYPDGTAAVQDINIEIKKGKKVAFVGQNGSGKSTLFLLLNGTLKPQEGEILFHGVPFKYDSKSLREIRKSVGIVFQNSDDQIFAPTVYQDVAFGPANLGYSKERVDACVQSALEYVGLIRLKDRPPHHLSGGQKKRVAIAGVMAMEPEVIILDEPLSNLDPVGADEIMDLLNEFNHFGSTIIISTHDVDLAYRWSDYVFLMSNSKLIGQGTPAEVFKEQELLKKVGLRQPTTLEIYHEIERRGLAYGRNSPKTIPDLVNTLKPLDLMWVDVAPGVREGDNLNIGVMYGEYATQSPYEAINATVLHIHPNGRAIVELKRKGIKAGGVLLYDTDKYSPDEVRQIIKEGEIAFVGAMGKKSKTLAEQDGIRLDVTSGVIDKSILMALCGKRCLILTAGGMVDHALKRTREYVDKSGIEFTVGVVNRDGGCKWLEETEGSPEKLKT.

Residues 4-239 (LETRSLKYSY…QELLKKVGLR (236 aa)) enclose the ABC transporter domain. 37–44 (GQNGSGKS) is an ATP binding site.

The protein belongs to the ABC transporter superfamily.

The protein localises to the cell membrane. In terms of biological role, probably part of an ABC transporter complex. Responsible for energy coupling to the transport system. The sequence is that of Putative ABC transporter ATP-binding protein MM_0462 from Methanosarcina mazei (strain ATCC BAA-159 / DSM 3647 / Goe1 / Go1 / JCM 11833 / OCM 88) (Methanosarcina frisia).